The primary structure comprises 427 residues: Phosphatidylglycerol--prolipoprotein diacylglyceryl transferase (427 aa).

4 consecutive transmembrane segments (helical) span residues valine 21–glycine 41, glycine 53–tyrosine 73, isoleucine 96–isoleucine 116, and glycine 122–isoleucine 142. Arginine 144 contributes to the a 1,2-diacyl-sn-glycero-3-phospho-(1'-sn-glycerol) binding site. The next 2 membrane-spanning stretches (helical) occupy residues valine 189–valine 209 and isoleucine 256–proline 276. The segment at glutamate 280–arginine 427 is disordered. Over residues glutamate 299–alanine 330 the composition is skewed to low complexity. The span at arginine 332–serine 346 shows a compositional bias: basic and acidic residues. Residues glutamate 347–glutamate 404 show a composition bias toward acidic residues. Basic and acidic residues predominate over residues glutamate 411–arginine 427.

The protein belongs to the Lgt family.

Its subcellular location is the cell membrane. It catalyses the reaction L-cysteinyl-[prolipoprotein] + a 1,2-diacyl-sn-glycero-3-phospho-(1'-sn-glycerol) = an S-1,2-diacyl-sn-glyceryl-L-cysteinyl-[prolipoprotein] + sn-glycerol 1-phosphate + H(+). The protein operates within protein modification; lipoprotein biosynthesis (diacylglyceryl transfer). In terms of biological role, catalyzes the transfer of the diacylglyceryl group from phosphatidylglycerol to the sulfhydryl group of the N-terminal cysteine of a prolipoprotein, the first step in the formation of mature lipoproteins. This Mycolicibacterium paratuberculosis (strain ATCC BAA-968 / K-10) (Mycobacterium paratuberculosis) protein is Phosphatidylglycerol--prolipoprotein diacylglyceryl transferase.